We begin with the raw amino-acid sequence, 1241 residues long: Interphotoreceptor matrix proteoglycan 2 (1241 aa).

The signal sequence occupies residues 1 to 22 (MIMFPLFGKISLGILIFVLIEG). Residues 23–1099 (DFPSLTAQTY…KHCEEFVSEP (1077 aa)) lie on the Extracellular side of the membrane. An N-linked (GlcNAc...) asparagine glycan is attached at Asn154. The tract at residues 180–223 (ELSSPVPVGDTSTLGDTTLSVPHPEVDAYEGASESSLERPEESI) is disordered. Residues 189–199 (DTSTLGDTTLS) show a composition bias toward polar residues. Thr190 and Thr192 each carry an O-linked (GalNAc...) threonine glycan. Residues 239–353 (GEQIAEFSIH…KPTVVYTISN (115 aa)) enclose the SEA 1 domain. The interval 259-267 (QDSSSFHHQ) is hyaluronan-binding motif involved in chondroitin sulfate A-binding. N-linked (GlcNAc...) asparagine glycans are attached at residues Asn301, Asn320, and Asn370. O-linked (GalNAc...) threonine glycans are attached at residues Thr544 and Thr556. Over residues 660 to 678 (QISKHSKYEHDDRSTHFPE) the composition is skewed to basic and acidic residues. The disordered stretch occupies residues 660 to 684 (QISKHSKYEHDDRSTHFPEEEPLSG). Positions 897–1010 (GALVVFFSLR…YSLDVESGDE (114 aa)) constitute an SEA 2 domain. 2 N-linked (GlcNAc...) asparagine glycosylation sites follow: Asn942 and Asn956. 2 EGF-like domains span residues 1010 to 1051 (EANP…RPCQ) and 1052 to 1093 (SLCD…KHCE). Cystine bridges form between Cys1014–Cys1025, Cys1019–Cys1036, Cys1038–Cys1050, Cys1054–Cys1067, Cys1061–Cys1077, and Cys1079–Cys1092. The interval 1080–1088 (RVGENWWYR) is hyaluronan-binding motif involved in chondroitin sulfate C-binding. Residues 1100–1120 (VIIGITIASVVGLLVIFSAII) traverse the membrane as a helical segment. Topologically, residues 1121–1241 (YFFIRTLQAH…FVREQQVEEV (121 aa)) are cytoplasmic. A hyaluronan-binding motif involved in chondroitin sulfate A- and C-binding region spans residues 1125-1133 (RTLQAHHDR). The segment at 1136-1145 (RESPFSGSSR) is hyaluronan-binding motif involved in chondroitin sulfate C-binding. Residues 1210-1218 (REEIQERMR) are hyaluronan-binding motif involved in chondroitin sulfate A- and C-binding motif.

In terms of processing, highly glycosylated (N- and O-linked carbohydrates). As to expression, expressed in the retina (at protein level). Expressed by photoreceptors of the interphotoreceptor matrix (IPM) surrounding both rods and cones (at protein level). IPM occupies the subretinal space between the apices of the retinal pigment epithelium and the neural retina. Expressed in the pineal gland (at protein level).

It localises to the photoreceptor outer segment membrane. It is found in the photoreceptor inner segment membrane. The protein localises to the secreted. The protein resides in the extracellular space. Its subcellular location is the extracellular matrix. It localises to the interphotoreceptor matrix. Functionally, chondroitin sulfate- and hyaluronan-binding proteoglycan involved in the organization of interphotoreceptor matrix; may participate in the maturation and maintenance of the light-sensitive photoreceptor outer segment. Binds heparin. This chain is Interphotoreceptor matrix proteoglycan 2 (IMPG2), found in Homo sapiens (Human).